The chain runs to 153 residues: Putative WASP homolog-associated protein with actin, membranes and microtubules-like protein 1 (153 aa).

A coiled-coil region spans residues 113–151 (AIQFYEIQLELYEVKFEILKNKEILLTTQLDSLERLIKD).

In Homo sapiens (Human), this protein is Putative WASP homolog-associated protein with actin, membranes and microtubules-like protein 1 (WHAMMP3).